Consider the following 345-residue polypeptide: Phosphoribosylformylglycinamidine cyclo-ligase (345 aa).

The protein belongs to the AIR synthase family.

The protein resides in the cytoplasm. It catalyses the reaction 2-formamido-N(1)-(5-O-phospho-beta-D-ribosyl)acetamidine + ATP = 5-amino-1-(5-phospho-beta-D-ribosyl)imidazole + ADP + phosphate + H(+). The protein operates within purine metabolism; IMP biosynthesis via de novo pathway; 5-amino-1-(5-phospho-D-ribosyl)imidazole from N(2)-formyl-N(1)-(5-phospho-D-ribosyl)glycinamide: step 2/2. The polypeptide is Phosphoribosylformylglycinamidine cyclo-ligase (Bifidobacterium longum subsp. infantis (strain ATCC 15697 / DSM 20088 / JCM 1222 / NCTC 11817 / S12)).